A 277-amino-acid chain; its full sequence is Large ribosomal subunit protein uL2 (277 aa).

Residues 226-277 form a disordered region; that stretch reads NPIDHPHGGGEGRTSGGRHPVTPWGKPTKGKKTRSNKSTNKFILISRHKRKK.

This sequence belongs to the universal ribosomal protein uL2 family. Part of the 50S ribosomal subunit. Forms a bridge to the 30S subunit in the 70S ribosome.

In terms of biological role, one of the primary rRNA binding proteins. Required for association of the 30S and 50S subunits to form the 70S ribosome, for tRNA binding and peptide bond formation. It has been suggested to have peptidyltransferase activity; this is somewhat controversial. Makes several contacts with the 16S rRNA in the 70S ribosome. The polypeptide is Large ribosomal subunit protein uL2 (Rhodopseudomonas palustris (strain BisA53)).